A 769-amino-acid chain; its full sequence is 3-O-beta-D-glucopyranosyl-beta-D-glucuronide phosphorylase (769 aa).

The active-site Proton donor is the D457.

The protein belongs to the glycosyl hydrolase 94 family. Homodimer.

The protein resides in the cytoplasm. The catalysed reaction is 3-O-beta-D-glucosyl-D-glucuronate + phosphate = aldehydo-D-glucuronate + alpha-D-glucose 1-phosphate. It carries out the reaction a 3-O-beta-D-glucosyl-beta-D-glucuronoside + phosphate = a beta-D-glucuronoside + alpha-D-glucose 1-phosphate. Its function is as follows. Glycoside phosphorylase that catalyzes the reversible phosphorolysis of 3-O-beta-D-glucosyl-D-glucuronate into D-glucuronic acid and alpha-D-glucose 1-phosphate. Cannot phosphorolyze cellobionic acid and laminaribiose. In the reverse direction, using alpha-D-glucose 1-phosphate as a donor substrate, the enzyme acts on D-glucuronate and its artificial derivative p-nitrophenyl-beta-D-glucuronide. The apparent catalytic efficiency towards p-nitrophenyl-beta-D-glucuronide is approximately 5-fold higher than that towards D-glucuronic acid. Is probably involved in the metabolism of oligosaccharides containing the 3-O-beta-D-glucopyranosyl-beta-D-glucuronide structure released from bacterial and plant acidic carbohydrates. This is 3-O-beta-D-glucopyranosyl-beta-D-glucuronide phosphorylase from Paenibacillus borealis.